A 206-amino-acid polypeptide reads, in one-letter code: Small ribosomal subunit protein uS4 (206 aa).

The 62-residue stretch at G96–A157 folds into the S4 RNA-binding domain.

The protein belongs to the universal ribosomal protein uS4 family. Part of the 30S ribosomal subunit. Contacts protein S5. The interaction surface between S4 and S5 is involved in control of translational fidelity.

In terms of biological role, one of the primary rRNA binding proteins, it binds directly to 16S rRNA where it nucleates assembly of the body of the 30S subunit. With S5 and S12 plays an important role in translational accuracy. The chain is Small ribosomal subunit protein uS4 from Sodalis glossinidius (strain morsitans).